Here is a 139-residue protein sequence, read N- to C-terminus: ATP synthase epsilon chain (139 aa).

It belongs to the ATPase epsilon chain family. As to quaternary structure, F-type ATPases have 2 components, CF(1) - the catalytic core - and CF(0) - the membrane proton channel. CF(1) has five subunits: alpha(3), beta(3), gamma(1), delta(1), epsilon(1). CF(0) has three main subunits: a, b and c.

The protein resides in the cell membrane. Produces ATP from ADP in the presence of a proton gradient across the membrane. The polypeptide is ATP synthase epsilon chain (Levilactobacillus brevis (strain ATCC 367 / BCRC 12310 / CIP 105137 / JCM 1170 / LMG 11437 / NCIMB 947 / NCTC 947) (Lactobacillus brevis)).